A 305-amino-acid chain; its full sequence is Ornithine carbamoyltransferase (305 aa).

Carbamoyl phosphate is bound by residues 52–55 (STRT), Q79, R103, and 130–133 (HPLQ). L-ornithine-binding positions include N162, D224, and 228–229 (SM). Carbamoyl phosphate-binding positions include 264–265 (CL) and R292.

The protein belongs to the aspartate/ornithine carbamoyltransferase superfamily. OTCase family.

The protein localises to the cytoplasm. It catalyses the reaction carbamoyl phosphate + L-ornithine = L-citrulline + phosphate + H(+). Its pathway is amino-acid biosynthesis; L-arginine biosynthesis; L-arginine from L-ornithine and carbamoyl phosphate: step 1/3. In terms of biological role, reversibly catalyzes the transfer of the carbamoyl group from carbamoyl phosphate (CP) to the N(epsilon) atom of ornithine (ORN) to produce L-citrulline. In Pyrobaculum aerophilum (strain ATCC 51768 / DSM 7523 / JCM 9630 / CIP 104966 / NBRC 100827 / IM2), this protein is Ornithine carbamoyltransferase.